Reading from the N-terminus, the 469-residue chain is Fe(3+)-Zn(2+) purple acid phosphatase 12 (469 aa).

The signal sequence occupies residues 1–28 (MSSRSDLKIKRVSLIIFLLSVLVEFCYG). An N-linked (GlcNAc...) asparagine glycan is attached at asparagine 114. Position 168 (aspartate 168) interacts with Fe cation. An N-linked (GlcNAc...) asparagine glycan is attached at asparagine 176. Residues aspartate 197 and tyrosine 200 each contribute to the Fe cation site. A Zn(2+)-binding site is contributed by aspartate 197. Asparagine 234 is a binding site for Zn(2+). Asparagine 234 lines the substrate pocket. The N-linked (GlcNAc...) asparagine glycan is linked to asparagine 307. Histidine 319 is a Zn(2+) binding site. The active-site Proton donor is histidine 329. Histidine 356 provides a ligand contact to Zn(2+). 356–358 (HVH) is a binding site for substrate. Histidine 358 contacts Fe cation. Residue asparagine 429 is glycosylated (N-linked (GlcNAc...) asparagine).

Belongs to the metallophosphoesterase superfamily. Purple acid phosphatase family. In terms of assembly, homodimer; disulfide-linked. It depends on Fe cation as a cofactor. Requires Zn(2+) as cofactor. In terms of tissue distribution, expressed in roots, stems, leaves, flowers and siliques.

Its subcellular location is the secreted. The catalysed reaction is a phosphate monoester + H2O = an alcohol + phosphate. This Arabidopsis thaliana (Mouse-ear cress) protein is Fe(3+)-Zn(2+) purple acid phosphatase 12 (PAP12).